A 35-amino-acid chain; its full sequence is Toxin Ado1 (35 aa).

3 disulfides stabilise this stretch: Cys5-Cys20, Cys12-Cys25, and Cys19-Cys32.

It localises to the secreted. Binds reversibly and blocks P/Q-type voltage-gated calcium channels (Cav). This is Toxin Ado1 from Agriosphodrus dohrni (Japanese assassin-bug).